The primary structure comprises 67 residues: Large ribosomal subunit protein uL29 (67 aa).

This sequence belongs to the universal ribosomal protein uL29 family.

The sequence is that of Large ribosomal subunit protein uL29 from Rubrobacter xylanophilus (strain DSM 9941 / JCM 11954 / NBRC 16129 / PRD-1).